The following is a 323-amino-acid chain: Aldo-keto reductase family 1 member C4 (323 aa).

Residues 20–24 (GFGTY) and aspartate 50 contribute to the NADP(+) site. The active-site Proton donor is tyrosine 55. Histidine 117 provides a ligand contact to substrate. NADP(+) contacts are provided by residues 166-167 (SN), glutamine 190, 216-221 (HSALGT), and 270-280 (KSYNEQRIREN).

Belongs to the aldo/keto reductase family. In terms of assembly, monomer. The N-terminus is blocked. Liver specific.

Its subcellular location is the cytoplasm. It is found in the cytosol. The catalysed reaction is a 3alpha-hydroxysteroid + NADP(+) = a 3-oxosteroid + NADPH + H(+). It catalyses the reaction a 3alpha-hydroxysteroid + NAD(+) = a 3-oxosteroid + NADH + H(+). The enzyme catalyses 5alpha-androstane-3alpha,17beta-diol + NADP(+) = 17beta-hydroxy-5alpha-androstan-3-one + NADPH + H(+). It carries out the reaction 5alpha-androstane-3beta,17beta-diol + NADP(+) = 17beta-hydroxy-5alpha-androstan-3-one + NADPH + H(+). The catalysed reaction is 5alpha-androstane-3alpha,17beta-diol + NAD(+) = 17beta-hydroxy-5alpha-androstan-3-one + NADH + H(+). It catalyses the reaction 17beta-estradiol + NADP(+) = estrone + NADPH + H(+). The enzyme catalyses 17beta-estradiol + NAD(+) = estrone + NADH + H(+). It carries out the reaction (20S)-hydroxypregn-4-en-3-one + NADP(+) = progesterone + NADPH + H(+). The catalysed reaction is (20S)-hydroxypregn-4-en-3-one + NAD(+) = progesterone + NADH + H(+). It catalyses the reaction androsterone + NADP(+) = 5alpha-androstan-3,17-dione + NADPH + H(+). The enzyme catalyses testosterone + NADP(+) = androst-4-ene-3,17-dione + NADPH + H(+). It carries out the reaction testosterone + NAD(+) = androst-4-ene-3,17-dione + NADH + H(+). The catalysed reaction is 3alpha-hydroxy-5alpha-androstane 17-O-(beta-D-glucuronate) + NADP(+) = 5alpha-dihydrotestosterone 17-O-(beta-D-glucuronate) + NADPH + H(+). It catalyses the reaction (3beta,5alpha,17beta)-3-hydroxy-androstan-17-yl sulfate + NADP(+) = 5alpha-dihydrotestosterone sulfate + NADPH + H(+). The enzyme catalyses 5alpha-androstane-3alpha,17beta-diol + NAD(+) = androsterone + NADH + H(+). It carries out the reaction chlordecone alcohol + NADP(+) = chlordecone + NADPH + H(+). The protein operates within steroid metabolism. Inhibited by nonsteroidal the anti-inflammatory drugs (NSAID) flufenamic. The oxidation reaction is inhibited by low micromolar concentrations of NADPH. In terms of biological role, cytosolic aldo-keto reductase that catalyzes the NADH and NADPH-dependent reduction of ketosteroids to hydroxysteroids. Liver specific enzyme that acts as an NAD(P)(H)-dependent 3-, 17- and 20-ketosteroid reductase on the steroid nucleus and side chain. Displays the ability to catalyze both oxidation and reduction in vitro, but most probably acts as a reductase in vivo since the oxidase activity measured in vitro is inhibited by physiological concentration of NADPH. Acts preferentially as a 3-alpha-hydroxysteroid dehydrogenase (HSD) with a subsidiary 3-beta-HSD activity. Catalyzes efficiently the transformation of the potent androgen 5-alpha-dihydrotestosterone (5alpha-DHT or 17beta-hydroxy-5alpha-androstan-3-one) into the less active form, 5-alpha-androstan-3-alpha,17-beta-diol (3-alpha-diol). Catalyzes the reduction of estrone into 17beta-estradiol but with low efficiency. Metabolizes a broad spectrum of natural and synthetic therapeutic steroid and plays an important role in metabolism of androgens, estrogens, progestereone and conjugated steroids. Catalyzes the biotransformation of the pesticide chlordecone (kepone) to its corresponding alcohol leading to increased biliary excretion of the pesticide and concomitant reduction of its neurotoxicity since bile is the major excretory route. This is Aldo-keto reductase family 1 member C4 (AKR1C4) from Homo sapiens (Human).